A 156-amino-acid chain; its full sequence is 6,7-dimethyl-8-ribityllumazine synthase (156 aa).

Residues F25, A59 to E61, and A83 to I85 contribute to the 5-amino-6-(D-ribitylamino)uracil site. A88 to T89 serves as a coordination point for (2S)-2-hydroxy-3-oxobutyl phosphate. The Proton donor role is filled by H91. F116 lines the 5-amino-6-(D-ribitylamino)uracil pocket. (2S)-2-hydroxy-3-oxobutyl phosphate is bound at residue R130.

It belongs to the DMRL synthase family.

The enzyme catalyses (2S)-2-hydroxy-3-oxobutyl phosphate + 5-amino-6-(D-ribitylamino)uracil = 6,7-dimethyl-8-(1-D-ribityl)lumazine + phosphate + 2 H2O + H(+). It participates in cofactor biosynthesis; riboflavin biosynthesis; riboflavin from 2-hydroxy-3-oxobutyl phosphate and 5-amino-6-(D-ribitylamino)uracil: step 1/2. Functionally, catalyzes the formation of 6,7-dimethyl-8-ribityllumazine by condensation of 5-amino-6-(D-ribitylamino)uracil with 3,4-dihydroxy-2-butanone 4-phosphate. This is the penultimate step in the biosynthesis of riboflavin. The polypeptide is 6,7-dimethyl-8-ribityllumazine synthase (Nitratidesulfovibrio vulgaris (strain ATCC 29579 / DSM 644 / CCUG 34227 / NCIMB 8303 / VKM B-1760 / Hildenborough) (Desulfovibrio vulgaris)).